A 383-amino-acid polypeptide reads, in one-letter code: MEEKENVNLVEKSNYVALENTREIDVFDEFLNAIGNENTITPVYADSSLTHLRKKSYTKVVHDCTYALVINPYDKKVIWRRGLAYLRLGHPHLANRDWEHSLELDPNNTYIQKSLHRLKEVYYIYRECAETWQLRHLRVASSQQLPVGLRKQYPNIIRGKIWWKKVHDNCQLCGQQCELKKENLSAMRSMLYMANTYAKDDTENHSPSAQIGIESSEDELENKITKGEHSLLVPEELYRSNYPCPQNIDQFLYMIKVLSAPCLYIETFSFPISTINQLFKAHGMSVEQLNLFLKSIHYIGLCSRFCKQWSDKARSLMQALSGLPWFSFVVQHCLHITAAQILLHIPDIQEEEFRNWHVSKKPINNTDLSSEFEIAEIPINCYT.

The stretch at 75-108 (KKVIWRRGLAYLRLGHPHLANRDWEHSLELDPNN) is one TPR repeat.

Its subcellular location is the cytoplasm. It is found in the nucleus. Functionally, has a role in meiosis. The sequence is that of Meiotically up-regulated gene 93 protein (mug93) from Schizosaccharomyces pombe (strain 972 / ATCC 24843) (Fission yeast).